A 452-amino-acid polypeptide reads, in one-letter code: Bis(5'-adenosyl)-triphosphatase enpp4 (452 aa).

An N-terminal signal peptide occupies residues 1-19 (MFGRVFIVAVLYCITICKG). Residues 20 to 407 (EDPTNSSTPK…NQWCIQVSEA (388 aa)) lie on the Extracellular side of the membrane. Asn24 carries an N-linked (GlcNAc...) asparagine glycan. Residues Asp36 and Thr72 each contribute to the Zn(2+) site. The active-site AMP-threonine intermediate is Thr72. Asn93 contributes to the substrate binding site. A glycan (N-linked (GlcNAc...) asparagine) is linked at Asn107. Position 154 (Tyr154) interacts with substrate. Asn155 and Asn175 each carry an N-linked (GlcNAc...) asparagine glycan. Zn(2+)-binding residues include Asp189 and His193. Residue Asp189 participates in substrate binding. N-linked (GlcNAc...) asparagine glycosylation is present at Asn202. Zn(2+)-binding residues include Asp237 and His238. Cysteines 254 and 287 form a disulfide. N-linked (GlcNAc...) asparagine glycosylation is found at Asn259 and Asn327. A Zn(2+)-binding site is contributed by His336. A glycan (N-linked (GlcNAc...) asparagine) is linked at Asn386. A disulfide bond links Cys394 and Cys401. The chain crosses the membrane as a helical span at residues 408–428 (IGIVIGAIMVLTTLTCIIIML). Topologically, residues 429 to 452 (KKKMPSARPFSRLQFQDDDDPLIG) are cytoplasmic.

The protein belongs to the nucleotide pyrophosphatase/phosphodiesterase family. It depends on Zn(2+) as a cofactor.

It is found in the cell membrane. It catalyses the reaction P(1),P(3)-bis(5'-adenosyl) triphosphate + H2O = AMP + ADP + 2 H(+). In terms of biological role, hydrolyzes extracellular Ap3A into AMP and ADP, and Ap4A into AMP and ATP. Ap3A and Ap4A are diadenosine polyphosphates thought to induce proliferation of vascular smooth muscle cells. Acts as a procoagulant, mediating platelet aggregation at the site of nascent thrombus via release of ADP from Ap3A and activation of ADP receptors. This is Bis(5'-adenosyl)-triphosphatase enpp4 (enpp4) from Xenopus laevis (African clawed frog).